The following is a 161-amino-acid chain: Large ribosomal subunit protein uL10 (161 aa).

It belongs to the universal ribosomal protein uL10 family. Part of the ribosomal stalk of the 50S ribosomal subunit. The N-terminus interacts with L11 and the large rRNA to form the base of the stalk. The C-terminus forms an elongated spine to which L12 dimers bind in a sequential fashion forming a multimeric L10(L12)X complex.

Functionally, forms part of the ribosomal stalk, playing a central role in the interaction of the ribosome with GTP-bound translation factors. The polypeptide is Large ribosomal subunit protein uL10 (Malacoplasma penetrans (strain HF-2) (Mycoplasma penetrans)).